Consider the following 147-residue polypeptide: Lysozyme C, tracheal isozyme (147 aa).

The first 18 residues, Met-1–Gly-18, serve as a signal peptide directing secretion. Residues Lys-19–Val-147 enclose the C-type lysozyme domain. Intrachain disulfides connect Cys-24–Cys-145, Cys-48–Cys-133, Cys-83–Cys-99, and Cys-95–Cys-113. Catalysis depends on residues Glu-53 and Asp-71.

The protein belongs to the glycosyl hydrolase 22 family. Monomer. In terms of tissue distribution, trachea.

The catalysed reaction is Hydrolysis of (1-&gt;4)-beta-linkages between N-acetylmuramic acid and N-acetyl-D-glucosamine residues in a peptidoglycan and between N-acetyl-D-glucosamine residues in chitodextrins.. Functionally, lysozymes have primarily a bacteriolytic function; those in tissues and body fluids are associated with the monocyte-macrophage system and enhance the activity of immunoagents. This chain is Lysozyme C, tracheal isozyme, found in Bos taurus (Bovine).